A 199-amino-acid polypeptide reads, in one-letter code: UPF0637 protein LACR_1918 (199 aa).

This sequence belongs to the UPF0637 family.

This chain is UPF0637 protein LACR_1918, found in Lactococcus lactis subsp. cremoris (strain SK11).